Here is a 273-residue protein sequence, read N- to C-terminus: Large ribosomal subunit protein uL2 (273 aa).

The interval 221 to 262 is disordered; sequence RGTAMNPVDHPHGGGEGRNFGKHPVTPWGVQTKGKKTRHNKR. The span at 253 to 262 shows a compositional bias: basic residues; that stretch reads KGKKTRHNKR.

It belongs to the universal ribosomal protein uL2 family. In terms of assembly, part of the 50S ribosomal subunit. Forms a bridge to the 30S subunit in the 70S ribosome.

Functionally, one of the primary rRNA binding proteins. Required for association of the 30S and 50S subunits to form the 70S ribosome, for tRNA binding and peptide bond formation. It has been suggested to have peptidyltransferase activity; this is somewhat controversial. Makes several contacts with the 16S rRNA in the 70S ribosome. This Haemophilus influenzae (strain ATCC 51907 / DSM 11121 / KW20 / Rd) protein is Large ribosomal subunit protein uL2.